Here is a 2703-residue protein sequence, read N- to C-terminus: Serine/arginine repetitive matrix protein 2 (2703 aa).

Met1 is subject to N-acetylmethionine. Residues 60-92 (HERKRRVELRCLELEEMMEEQGYEEQQIQEKVA) adopt a coiled-coil conformation. Lys101 carries the N6-acetyllysine modification. Glycyl lysine isopeptide (Lys-Gly) (interchain with G-Cter in SUMO2) cross-links involve residues Lys108 and Lys130. The segment at 141 to 1007 (ISDSYVDGSS…SGSFHLCPGV (867 aa)) is disordered. A Phosphotyrosine modification is found at Tyr145. The residue at position 169 (Lys169) is an N6-acetyllysine. Composition is skewed to basic residues over residues 186 to 197 (KQKKKKKKKDRG) and 207 to 249 (RERK…KRSR). Residues 197–259 (GRRSESSSPR…STTPAPKSRR (63 aa)) form a sufficient for RNA-binding region. 2 positions are modified to phosphoserine: Ser220 and Ser222. The span at 263–284 (STSADSASSSDTSRSRSRSAAA) shows a compositional bias: low complexity. 5 positions are modified to phosphoserine: Ser295, Ser300, Ser310, Ser322, and Ser323. Residues 319–334 (QQPSSPAPSTKQSSSP) show a composition bias toward low complexity. The span at 335–345 (YEDKDKKEKSA) shows a compositional bias: basic and acidic residues. Phosphoserine is present on residues Ser349, Ser351, Ser355, and Ser356. Phosphothreonine occurs at positions 357 and 365. Phosphoserine is present on residues Ser375, Ser385, Ser393, Ser396, Ser402, Ser406, Ser422, Ser433, Ser434, Ser435, Ser438, Ser452, Ser482, Ser484, Ser503, Ser505, Ser507, Ser531, Ser533, and Ser540. Positions 383-396 (PSSQEPVNPSSEAS) are enriched in polar residues. Polar residues predominate over residues 425–437 (PTKGSRHASSSPE). Positions 459-533 (NRSHGRAKRD…SPQRRGRSRS (75 aa)) are enriched in basic residues. A compositionally biased stretch (low complexity) spans 534-543 (PQRPGWSRSR). Composition is skewed to basic residues over residues 544–561 (NTQR…RSHS), 568–721 (GRSR…RRGR), and 730–740 (NKSRTSQRRSR). Phosphoserine is present on residues Ser700, Ser702, and Ser704. 3 positions are modified to phosphoserine: Ser773, Ser775, and Ser778. Low complexity predominate over residues 785–817 (SQTPTRRSRSGSSPPKQKSKTPPRQSRSNSPQP). Phosphoserine occurs at positions 821 and 829. Composition is skewed to polar residues over residues 829-851 (SVTN…SESS) and 859-874 (RTPS…PRVK). Residues Thr831 and Thr841 each carry the phosphothreonine modification. Phosphoserine is present on residues Ser846, Ser850, and Ser851. Composition is skewed to low complexity over residues 875–891 (SSTP…SPQP) and 898–919 (SPRG…TSRT). Ser882, Ser909, Ser924, Ser926, Ser928, Ser940, Ser942, Ser944, Ser945, Ser946, and Ser949 each carry phosphoserine. At Thr955 the chain carries Phosphothreonine. The segment covering 960 to 1000 (SGSTSPYLKSMLQTPPDQNLSGSKSPCPQKSRDSPTGSSGS) has biased composition (polar residues). A phosphoserine mark is found at Ser962 and Ser964. Residue Tyr966 is modified to Phosphotyrosine. A Phosphothreonine modification is found at Thr973. Phosphoserine occurs at positions 980, 984, and 993. Residue Thr995 is modified to Phosphothreonine. Phosphoserine occurs at positions 997, 1000, 1011, 1037, and 1038. The segment covering 1024–1057 (VQQKGHTQTWPDTSSPEVMQTQVESPLLQSKSQT) has biased composition (polar residues). Residues 1024–1112 (VQQKGHTQTW…TKPDSSIYPL (89 aa)) are disordered. Thr1044 carries the phosphothreonine modification. Residues Ser1048, Ser1064, Ser1066, Ser1067, and Ser1068 each carry the phosphoserine modification. Residues 1058–1068 (SPKGSLSRSSS) show a composition bias toward low complexity. Phosphothreonine is present on Thr1071. Ser1077, Ser1087, Ser1094, Ser1097, Ser1117, Ser1151, Ser1159, Ser1175, Ser1188, Ser1216, Ser1225, Ser1229, Ser1230, Ser1269, Ser1276, Ser1278, Ser1284, Ser1287, Ser1294, Ser1305, Ser1325, Ser1338, Ser1339, Ser1340, Ser1343, Ser1359, and Ser1360 each carry phosphoserine. Over residues 1079–1092 (VKQDKSEISTDPKL) the composition is skewed to basic and acidic residues. The disordered stretch occupies residues 1136–2092 (IQEDVASSCI…RSPGMLEPLG (957 aa)). A compositionally biased stretch (basic and acidic residues) spans 1146–1158 (PRDKFSPTQDRPE). Over residues 1270–1284 (PEHKELSHSPPRENS) the composition is skewed to basic and acidic residues. Over residues 1285–1304 (FESSLEFKNSGPVSEVNTGF) the composition is skewed to polar residues. Thr1370 bears the Phosphothreonine mark. A compositionally biased stretch (basic and acidic residues) spans 1371–1387 (PSRERSSSASPELKDGL). Phosphoserine occurs at positions 1372, 1378, and 1380. At Thr1390 the chain carries Phosphothreonine. A compositionally biased stretch (low complexity) spans 1397-1408 (SGSSPGLRDGSG). Phosphoserine occurs at positions 1400 and 1407. A Phosphothreonine modification is found at Thr1409. Polar residues predominate over residues 1409 to 1431 (TPSRHSLSGSSPGMKDTPQTPSR). 4 positions are modified to phosphoserine: Ser1414, Ser1416, Ser1418, and Ser1419. Thr1428 is subject to Phosphothreonine. Phosphoserine occurs at positions 1438 and 1439. Residue Thr1448 is modified to Phosphothreonine. Residues Ser1453, Ser1455, Ser1457, Ser1458, and Ser1465 each carry the phosphoserine modification. A compositionally biased stretch (polar residues) spans 1454–1468 (HSPSSPERNNKSVTP). Phosphothreonine is present on Thr1467. Residues Ser1473, Ser1475, Ser1477, and Ser1478 each carry the phosphoserine modification. Polar residues predominate over residues 1475 to 1489 (SESSVEQKNLARTSP). Phosphothreonine is present on Thr1487. A compositionally biased stretch (low complexity) spans 1490–1499 (GQRSRSGSSQ). Residues Ser1493, Ser1495, Ser1497, Ser1498, and Ser1508 each carry the phosphoserine modification. A compositionally biased stretch (basic and acidic residues) spans 1511–1523 (ERSESDSSPDSKP). Over residues 1524-1533 (KTRTPLRQRS) the composition is skewed to basic residues. Residues Ser1533, Ser1535, Ser1537, Ser1538, Ser1554, Ser1556, Ser1557, Ser1572, Ser1576, Ser1577, Ser1604, Ser1614, Ser1647, Ser1649, and Ser1650 each carry the phosphoserine modification. The span at 1604–1613 (SPEGSSSSES) shows a compositional bias: low complexity. Basic residues predominate over residues 1637–1647 (KSHTPPRRRSS). Position 1654 is a phosphothreonine (Thr1654). Phosphoserine occurs at positions 1683, 1685, 1687, 1688, 1718, and 1720. Basic residues-rich tracts occupy residues 1725–1745 (GLQR…RRRD) and 1754–1772 (SRRR…RRRG). 6 positions are modified to phosphoserine: Ser1774, Ser1778, Ser1810, Ser1813, Ser1832, and Ser1834. Low complexity predominate over residues 1776–1789 (YHSRSPTRQESSRT). Positions 1790–1810 (SSRRRRGRSRTPLTSRKRSRS) are enriched in basic residues. Residues 1818–2020 (KRSRSRASPA…PRAARGKRSL (203 aa)) are compositionally biased toward basic residues. The residue at position 1836 (Thr1836) is a Phosphothreonine. Ser1840 and Ser1846 each carry phosphoserine. Residue Thr1848 is modified to Phosphothreonine. Ser1849, Ser1869, Ser1872, Ser1876, and Ser1878 each carry phosphoserine. A phosphothreonine mark is found at Thr1880 and Thr1884. Residues Ser1898 and Ser1900 each carry the phosphoserine modification. Phosphothreonine occurs at positions 1902 and 1906. A phosphoserine mark is found at Ser1910 and Ser1912. Thr1914 and Thr1918 each carry phosphothreonine. A phosphoserine mark is found at Ser1922, Ser1924, and Ser1927. At Thr1930 the chain carries Phosphothreonine. Phosphoserine occurs at positions 1936, 1939, 1948, 1951, 1960, 1963, 1970, and 1972. The residue at position 1974 (Thr1974) is a Phosphothreonine. Phosphoserine is present on residues Ser1982 and Ser1984. Phosphothreonine is present on Thr1986. Ser1994, Ser1996, Ser1998, and Ser2019 each carry phosphoserine. Thr2021 is subject to Phosphothreonine. The span at 2022-2047 (RSPPAIRRRSASGSSSDRSRSATPPA) shows a compositional bias: low complexity. A phosphoserine mark is found at Ser2023 and Ser2042. A Phosphothreonine modification is found at Thr2044. Residues Ser2052 and Ser2054 each carry the phosphoserine modification. Thr2056 is modified (phosphothreonine). A compositionally biased stretch (low complexity) spans 2062-2076 (SSSRMSCFSRPSMSP). Ser2070, Ser2073, Ser2075, and Ser2084 each carry phosphoserine. Residue Thr2096 is modified to Phosphothreonine. Arg2146, Arg2159, Arg2183, and Arg2198 each carry omega-N-methylarginine. Phosphoserine is present on Ser2224. An omega-N-methylarginine mark is found at Arg2226 and Arg2240. A phosphothreonine mark is found at Thr2241 and Thr2254. Ser2262 carries the phosphoserine modification. The segment at 2263-2703 (LTGSGTPPTA…SNRHRSSRSP (441 aa)) is disordered. Phosphothreonine is present on residues Thr2268 and Thr2281. The span at 2269-2283 (PPTAANYPSSSRTPQ) shows a compositional bias: polar residues. Residue Arg2295 is modified to Omega-N-methylarginine. 3 positions are modified to phosphoserine: Ser2296, Ser2321, and Ser2329. Thr2334 bears the Phosphothreonine mark. Ser2335 is subject to Phosphoserine. An Asymmetric dimethylarginine; alternate modification is found at Arg2337. Arg2337 carries the omega-N-methylarginine; alternate modification. Residues Ser2347, Ser2351, and Ser2360 each carry the phosphoserine modification. At Thr2362 the chain carries Phosphothreonine. Ser2365, Ser2368, Ser2381, Ser2384, Ser2404, and Ser2408 each carry phosphoserine. 2 stretches are compositionally biased toward polar residues: residues 2410–2443 (FSDQ…SASD) and 2467–2476 (TGAQQPSTLA). The segment covering 2487–2521 (SSSSSSSSSSSSSSSSSSSSSSSSGSSSSDSEGSS) has biased composition (low complexity). Phosphoserine is present on Ser2535. Residue Thr2537 is modified to Phosphothreonine. Lys2541 participates in a covalent cross-link: Glycyl lysine isopeptide (Lys-Gly) (interchain with G-Cter in SUMO2). A Phosphothreonine modification is found at Thr2553. Residues 2562–2602 (SSSSSSSSSSSSSSSSSSSSSSSSSSSSSSSSSSSSSSSSS) are compositionally biased toward low complexity. Over residues 2605 to 2622 (PAKPGPQALPKPASPKKP) the composition is skewed to pro residues. Residues Ser2618, Ser2629, Ser2631, Ser2638, Ser2642, Ser2644, Ser2646, Ser2648, Ser2656, and Ser2660 each carry the phosphoserine modification. A compositionally biased stretch (basic and acidic residues) spans 2623 to 2643 (PPGERRSRSPRKPIDSLRDSR). Residue Thr2689 is modified to Phosphothreonine. At Ser2691 the chain carries Phosphoserine. Positions 2694–2703 (SNRHRSSRSP) are enriched in basic residues.

The protein belongs to the CWC21 family. Component of pre-catalytic, catalytic and post-catalytic spliceosome complexes. Found in a pre-mRNA splicing complex with SFRS4, SFRS5, SNRP70, SNRPA1, SRRM1 and SRRM2. Component of the minor spliceosome, which splices U12-type introns. Interacts with DHX8. Interacts with CACTIN.

The protein resides in the nucleus. It is found in the nucleus speckle. Its function is as follows. Required for pre-mRNA splicing as component of the spliceosome. As a component of the minor spliceosome, involved in the splicing of U12-type introns in pre-mRNAs. The chain is Serine/arginine repetitive matrix protein 2 (Srrm2) from Mus musculus (Mouse).